Reading from the N-terminus, the 309-residue chain is Anamorsin (309 aa).

The tract at residues 6–172 (ISPGQLVAVF…KPNFEVGSSS (167 aa)) is N-terminal SAM-like domain. Residues 173–222 (QLKLLHKKSSSVKPVVDPATAKLWTLSANDMEDDSMDLIDSDELLDPEDL) form a linker region. Residues S182, S183, and S213 each carry the phosphoserine modification. [2Fe-2S] cluster contacts are provided by C235, C244, C247, and C249. The segment at 235 to 249 (CGEGKKRKACKNCTC) is fe-S binding site A. S269 bears the Phosphoserine mark. [4Fe-4S] cluster contacts are provided by C271, C274, C282, and C285. 2 short sequence motifs (cx2C motif) span residues 271-274 (CGNC) and 282-285 (CANC). The segment at 271 to 285 (CGNCYLGDAFRCANC) is fe-S binding site B. Phosphoserine occurs at positions 302 and 304.

The protein belongs to the anamorsin family. As to quaternary structure, monomer. Interacts with NDOR1. Interacts with CHCHD4. [2Fe-2S] cluster serves as cofactor. It depends on [4Fe-4S] cluster as a cofactor.

Its subcellular location is the cytoplasm. The protein resides in the nucleus. It localises to the mitochondrion intermembrane space. In terms of biological role, component of the cytosolic iron-sulfur (Fe-S) protein assembly (CIA) machinery required for the maturation of extramitochondrial Fe-S proteins. Part of an electron transfer chain functioning in an early step of cytosolic Fe-S biogenesis, facilitating the de novo assembly of a [4Fe-4S] cluster on the scaffold complex NUBP1-NUBP2. Electrons are transferred to CIAPIN1 from NADPH via the FAD- and FMN-containing protein NDOR1. NDOR1-CIAPIN1 are also required for the assembly of the diferric tyrosyl radical cofactor of ribonucleotide reductase (RNR), probably by providing electrons for reduction during radical cofactor maturation in the catalytic small subunit. Has anti-apoptotic effects in the cell. Involved in negative control of cell death upon cytokine withdrawal. Promotes development of hematopoietic cells. This chain is Anamorsin, found in Rattus norvegicus (Rat).